A 719-amino-acid polypeptide reads, in one-letter code: 2'-5'-oligoadenylate synthase 2 (719 aa).

Gly-2 carries the N-myristoyl glycine lipid modification. OAS domain regions lie at residues 11 to 335 (VPAQ…SWNV) and 343 to 683 (TPGH…WKVP). Lys-378 bears the N6-acetyllysine mark. Residue Ser-396 participates in ATP binding. The Mg(2+) site is built by Asp-408, Asp-410, and Asp-481. ATP is bound by residues Arg-544 and Lys-547.

This sequence belongs to the 2-5A synthase family. In terms of assembly, homodimer. Requires Mg(2+) as cofactor. Post-translationally, myristoylation is not essential for its activity. In terms of processing, glycosylated. Glycosylation is essential for its activity.

The protein resides in the cytoplasm. It localises to the perinuclear region. The enzyme catalyses 3 ATP = 5'-triphosphoadenylyl-(2'-&gt;5')-adenylyl-(2'-&gt;5')-adenosine + 2 diphosphate. With respect to regulation, produced as a latent enzyme which is activated by double stranded RNA (dsRNA) generated during the course of viral infection. The dsRNA activator must be at least 15 nucleotides long, and no modification of the 2'-hydroxyl group is tolerated. ssRNA or dsDNA do not act as activators. Strongly inhibited by copper, iron and zinc ions. Partially inhibited by cobalt and nickel ions. In terms of biological role, interferon-induced, dsRNA-activated antiviral enzyme which plays a critical role in cellular innate antiviral response. Activated by detection of double stranded RNA (dsRNA): polymerizes higher oligomers of 2'-5'-oligoadenylates (2-5A) from ATP which then bind to the inactive monomeric form of ribonuclease L (RNASEL) leading to its dimerization and subsequent activation. Activation of RNASEL leads to degradation of cellular as well as viral RNA, resulting in the inhibition of protein synthesis, thus terminating viral replication. Can mediate the antiviral effect via the classical RNASEL-dependent pathway or an alternative antiviral pathway independent of RNASEL. In addition, it may also play a role in other cellular processes such as apoptosis, cell growth, differentiation and gene regulation. May act as a negative regulator of lactation, stopping lactation in virally infected mammary gland lobules, thereby preventing transmission of viruses to neonates. Non-infected lobules would not be affected, allowing efficient pup feeding during infection. The protein is 2'-5'-oligoadenylate synthase 2 of Homo sapiens (Human).